The following is a 481-amino-acid chain: Cobyric acid synthase (481 aa).

The region spanning 248-435 (ALTVAWLAFS…LHGMFGADGF (188 aa)) is the GATase cobBQ-type domain. Cysteine 330 serves as the catalytic Nucleophile. Histidine 427 is a catalytic residue.

The protein belongs to the CobB/CobQ family. CobQ subfamily.

It functions in the pathway cofactor biosynthesis; adenosylcobalamin biosynthesis. Its function is as follows. Catalyzes amidations at positions B, D, E, and G on adenosylcobyrinic A,C-diamide. NH(2) groups are provided by glutamine, and one molecule of ATP is hydrogenolyzed for each amidation. This chain is Cobyric acid synthase, found in Cereibacter sphaeroides (strain ATCC 17023 / DSM 158 / JCM 6121 / CCUG 31486 / LMG 2827 / NBRC 12203 / NCIMB 8253 / ATH 2.4.1.) (Rhodobacter sphaeroides).